We begin with the raw amino-acid sequence, 417 residues long: Zinc-finger homeodomain protein 4 (417 aa).

The segment covering 1–12 (MVSILQLQTRTE) has biased composition (polar residues). 2 disordered regions span residues 1-22 (MVSI…ASAA) and 31-50 (RQQQ…FQER). A compositionally biased stretch (low complexity) spans 13-22 (ASPASSASAA). The segment covering 36 to 46 (QEGEEEEEEFE) has biased composition (acidic residues). The ZF-HD dimerization-type; degenerate zinc finger occupies 145–194 (YRECLKNHAAAIGGNATDGCGEFMPSGEEGSLEALKCSACGCHRNFHRKE). Disordered regions lie at residues 281-309 (DEMD…FRTK) and 361-417 (NLAK…LKLE). Residues 286 to 298 (SGGGGGVGRGGGS) show a composition bias toward gly residues. Residues 303-366 (KKRFRTKFTA…NNKHNLAKKP (64 aa)) constitute a DNA-binding region (homeobox). A compositionally biased stretch (pro residues) spans 368 to 417 (PSSPPPPPQIPPMSMPPSPPPPQIPPMSMPPSPPPMPMPMPPSPPQLKLE).

As to quaternary structure, homo- and heterodimer with other ZFHD proteins.

It is found in the nucleus. Putative transcription factor. The sequence is that of Zinc-finger homeodomain protein 4 (ZHD4) from Oryza sativa subsp. japonica (Rice).